Consider the following 338-residue polypeptide: MLFQNVSIAGLAHIDAPHTLTSKEINERLQPTYDRLGIKTDVLGDVAGIHARRLWDQDVQASDAATQAARKALIDANIGIEKIGLLINTSVSRDYLEPSTASIVSGNLGVSDHCMTFDVANACLAFINGMDIAARMLERGEIDYALVVDGETANLVYEKTLERMTSPDVTEEEFRNELAALTLGCGAAAMVMARSELVPDAPRYKGGVTRSATEWNKLCRGNLDRMVTDTRLLLIEGIKLAQKTFVAAKQVLGWAVEELDQFVIHQVSRPHTAAFVKSFGIDPAKVMTIFGEHGNIGPASVPIVLSKLKELGRLKKGDRIALLGIGSGLNCSMAEVVW.

The Mn(2+) site is built by H18 and D56. The active-site Proton acceptor is E97. Residue C123 is the Acyl-thioester intermediate of the active site.

It belongs to the thiolase-like superfamily. OleA family. In terms of assembly, homodimer. Weakly associates with the OleBCD complex.

Its subcellular location is the cytoplasm. The catalysed reaction is a 1,2-saturated acyl-CoA + an acyl-CoA + H2O = an (R)-2-alkyl-3-oxoalkanoate + 2 CoA + H(+). Inhibited by cerulenin. In terms of biological role, involved in olefin biosynthesis. Catalyzes a non-decarboxylative head-to-head Claisen condensation of two acyl-CoA molecules, generating an (R)-2-alkyl-3-oxoalkanoate. Is active with fatty acyl-CoA substrates that ranged from C(8) to C(16) in length, and is the most active with palmitoyl-CoA and myristoyl-CoA. This is Acyl-CoA:acyl-CoA alkyltransferase from Xanthomonas campestris pv. campestris (strain ATCC 33913 / DSM 3586 / NCPPB 528 / LMG 568 / P 25).